The sequence spans 559 residues: Sulfite reductase [NADPH] hemoprotein beta-component (559 aa).

[4Fe-4S] cluster contacts are provided by cysteine 423, cysteine 429, cysteine 468, and cysteine 472. Residue cysteine 472 coordinates siroheme.

This sequence belongs to the nitrite and sulfite reductase 4Fe-4S domain family. As to quaternary structure, alpha(8)-beta(8). The alpha component is a flavoprotein, the beta component is a hemoprotein. It depends on siroheme as a cofactor. The cofactor is [4Fe-4S] cluster.

It carries out the reaction hydrogen sulfide + 3 NADP(+) + 3 H2O = sulfite + 3 NADPH + 4 H(+). Its pathway is sulfur metabolism; hydrogen sulfide biosynthesis; hydrogen sulfide from sulfite (NADPH route): step 1/1. Its function is as follows. Component of the sulfite reductase complex that catalyzes the 6-electron reduction of sulfite to sulfide. This is one of several activities required for the biosynthesis of L-cysteine from sulfate. The sequence is that of Sulfite reductase [NADPH] hemoprotein beta-component from Thiocapsa roseopersicina.